Reading from the N-terminus, the 356-residue chain is Guanine nucleotide-binding protein alpha-3 subunit (356 aa).

The tract at residues 1–26 is disordered; that stretch reads MGACMSKNDEETEQKKRSQKIDRDLE. Residue Gly-2 is the site of N-myristoyl glycine attachment. Cys-4 is lipidated: S-palmitoyl cysteine. Residues 7 to 23 are compositionally biased toward basic and acidic residues; the sequence is KNDEETEQKKRSQKIDR. The G-alpha domain maps to 34 to 356; sequence KECKILLLGS…NNALKDSGIL (323 aa). Residues 37–50 are G1 motif; that stretch reads KILLLGSGESGKST. GTP-binding positions include 42–49, 179–185, 204–208, 273–276, and Ala-328; these read GSGESGKS, LRARTKT, DVGGQ, and NKVD. Mg(2+) contacts are provided by Ser-49 and Thr-185. The interval 177–185 is G2 motif; it reads DVLRARTKT. The segment at 200-209 is G3 motif; it reads IHMFDVGGQR. The interval 269–276 is G4 motif; sequence ILFLNKVD. Positions 326–331 are G5 motif; the sequence is TQATDT.

It belongs to the G-alpha family. G(q) subfamily. In terms of assembly, g proteins are composed of 3 units; alpha, beta and gamma. The alpha chain contains the guanine nucleotide binding site.

Functionally, guanine nucleotide-binding proteins (G proteins) are involved as modulators or transducers in various transmembrane signaling systems. Involved in conidiation. In Neurospora crassa (strain ATCC 24698 / 74-OR23-1A / CBS 708.71 / DSM 1257 / FGSC 987), this protein is Guanine nucleotide-binding protein alpha-3 subunit (gna-3).